The chain runs to 244 residues: Flavin-dependent thymidylate synthase (244 aa).

Residues 2–207 (VRVTLVNYTK…DIRPIIKWAK (206 aa)) form the ThyX domain. FAD is bound by residues S56, 80–82 (RHR), and Q88. DUMP is bound by residues 77-80 (QLVR), 88-92 (QQSQR), and R146. The ThyX motif signature appears at 80 to 90 (RHRIASYTQQS). FAD is bound by residues 162 to 164 (NLR) and H168. Residue R173 participates in dUMP binding. R173 acts as the Involved in ionization of N3 of dUMP, leading to its activation in catalysis.

Belongs to the thymidylate synthase ThyX family. In terms of assembly, homotetramer. It depends on FAD as a cofactor.

It catalyses the reaction dUMP + (6R)-5,10-methylene-5,6,7,8-tetrahydrofolate + NADPH + H(+) = dTMP + (6S)-5,6,7,8-tetrahydrofolate + NADP(+). It participates in pyrimidine metabolism; dTTP biosynthesis. In terms of biological role, catalyzes the reductive methylation of 2'-deoxyuridine-5'-monophosphate (dUMP) to 2'-deoxythymidine-5'-monophosphate (dTMP) while utilizing 5,10-methylenetetrahydrofolate (mTHF) as the methyl donor, and NADPH and FADH(2) as the reductant. This Pyrococcus furiosus (strain ATCC 43587 / DSM 3638 / JCM 8422 / Vc1) protein is Flavin-dependent thymidylate synthase.